The primary structure comprises 177 residues: MSLTAQFSPPVTGITRSLRDTKPSLSNLRVFPVYTEIRTMTTSNLRKSACFVAKAIEQRRDTAGSESESEATPSPAEESGSGEDKEVEISAIGAEIKAAMEQRKTAEEEKGKNEFLSGVAEEVKEIEWPAFQKVLGTTGVVLGVIAGSSVVLLTVNFLLAELSDRVFIGRGVQDFFS.

A chloroplast-targeting transit peptide spans 1–38 (MSLTAQFSPPVTGITRSLRDTKPSLSNLRVFPVYTEIR). The segment at 60–87 (RDTAGSESESEATPSPAEESGSGEDKEV) is disordered. Residues 64-79 (GSESESEATPSPAEES) show a composition bias toward low complexity. The helical transmembrane segment at 140–160 (VVLGVIAGSSVVLLTVNFLLA) threads the bilayer.

This sequence belongs to the SecE/SEC61-gamma family. In terms of assembly, part of the Sec protein translocation apparatus. Interacts with SCY1 and ALB3.

The protein resides in the plastid. It is found in the chloroplast thylakoid membrane. Its function is as follows. Involved in the import/insertion pathway in the thylakoids. The signal recognition particle is not involved in the insertion of SECE1 in the thylakoid membrane. The polypeptide is Preprotein translocase subunit SECE1 (SECE1) (Arabidopsis thaliana (Mouse-ear cress)).